The chain runs to 125 residues: Large ribosomal subunit protein bL12 (125 aa).

It belongs to the bacterial ribosomal protein bL12 family. Homodimer. Part of the ribosomal stalk of the 50S ribosomal subunit. Forms a multimeric L10(L12)X complex, where L10 forms an elongated spine to which 2 to 4 L12 dimers bind in a sequential fashion. Binds GTP-bound translation factors.

In terms of biological role, forms part of the ribosomal stalk which helps the ribosome interact with GTP-bound translation factors. Is thus essential for accurate translation. The polypeptide is Large ribosomal subunit protein bL12 (Gluconacetobacter diazotrophicus (strain ATCC 49037 / DSM 5601 / CCUG 37298 / CIP 103539 / LMG 7603 / PAl5)).